The sequence spans 34 residues: Photosystem II reaction center protein M (34 aa).

Residues 5-25 (ILAFIATALFISIPTAFLLIP) form a helical membrane-spanning segment.

This sequence belongs to the PsbM family. In terms of assembly, PSII is composed of 1 copy each of membrane proteins PsbA, PsbB, PsbC, PsbD, PsbE, PsbF, PsbH, PsbI, PsbJ, PsbK, PsbL, PsbM, PsbT, PsbX, PsbY, PsbZ, Psb30/Ycf12, at least 3 peripheral proteins of the oxygen-evolving complex and a large number of cofactors. It forms dimeric complexes.

It is found in the plastid. It localises to the chloroplast thylakoid membrane. Functionally, one of the components of the core complex of photosystem II (PSII). PSII is a light-driven water:plastoquinone oxidoreductase that uses light energy to abstract electrons from H(2)O, generating O(2) and a proton gradient subsequently used for ATP formation. It consists of a core antenna complex that captures photons, and an electron transfer chain that converts photonic excitation into a charge separation. This subunit is found at the monomer-monomer interface. This chain is Photosystem II reaction center protein M, found in Psilotum nudum (Whisk fern).